The sequence spans 336 residues: tRNA N6-adenosine threonylcarbamoyltransferase (336 aa).

Residues His112 and His116 each contribute to the Fe cation site. Substrate contacts are provided by residues 136–140, Asp169, Gly182, and Asn276; that span reads LVSGG. Residue Asp304 coordinates Fe cation.

It belongs to the KAE1 / TsaD family. Fe(2+) serves as cofactor.

It localises to the cytoplasm. It catalyses the reaction L-threonylcarbamoyladenylate + adenosine(37) in tRNA = N(6)-L-threonylcarbamoyladenosine(37) in tRNA + AMP + H(+). Functionally, required for the formation of a threonylcarbamoyl group on adenosine at position 37 (t(6)A37) in tRNAs that read codons beginning with adenine. Is involved in the transfer of the threonylcarbamoyl moiety of threonylcarbamoyl-AMP (TC-AMP) to the N6 group of A37, together with TsaE and TsaB. TsaD likely plays a direct catalytic role in this reaction. The protein is tRNA N6-adenosine threonylcarbamoyltransferase of Francisella tularensis subsp. holarctica (strain LVS).